Reading from the N-terminus, the 306-residue chain is Ornithine carbamoyltransferase (306 aa).

Carbamoyl phosphate is bound by residues 53 to 56 (STRT), glutamine 80, arginine 104, and 131 to 134 (HPCQ). L-ornithine is bound by residues asparagine 162, aspartate 219, and 223–224 (SM). Residues 259-260 (CL) and arginine 287 contribute to the carbamoyl phosphate site.

It belongs to the aspartate/ornithine carbamoyltransferase superfamily. OTCase family.

Its subcellular location is the cytoplasm. It carries out the reaction carbamoyl phosphate + L-ornithine = L-citrulline + phosphate + H(+). The protein operates within amino-acid biosynthesis; L-arginine biosynthesis; L-arginine from L-ornithine and carbamoyl phosphate: step 1/3. Its function is as follows. Reversibly catalyzes the transfer of the carbamoyl group from carbamoyl phosphate (CP) to the N(epsilon) atom of ornithine (ORN) to produce L-citrulline. The sequence is that of Ornithine carbamoyltransferase from Acinetobacter baylyi (strain ATCC 33305 / BD413 / ADP1).